The chain runs to 242 residues: Large ribosomal subunit protein uL2 (242 aa).

A disordered region spans residues 201–242; sequence VDHPFGGGRHQHTGKPTTVSRKKVPPGRKVGHISARRTGVRK. The span at 220–242 shows a compositional bias: basic residues; it reads SRKKVPPGRKVGHISARRTGVRK.

The protein belongs to the universal ribosomal protein uL2 family. In terms of assembly, part of the 50S ribosomal subunit. Forms a bridge to the 30S subunit in the 70S ribosome.

Its function is as follows. One of the primary rRNA binding proteins. Required for association of the 30S and 50S subunits to form the 70S ribosome, for tRNA binding and peptide bond formation. It has been suggested to have peptidyltransferase activity; this is somewhat controversial. Makes several contacts with the 16S rRNA in the 70S ribosome. The chain is Large ribosomal subunit protein uL2 from Methanocaldococcus jannaschii (strain ATCC 43067 / DSM 2661 / JAL-1 / JCM 10045 / NBRC 100440) (Methanococcus jannaschii).